We begin with the raw amino-acid sequence, 826 residues long: Ribonucleases P/MRP protein subunit POP1 (826 aa).

2 disordered regions span residues 1 to 24 (MATT…PRKI) and 49 to 91 (NKDF…SGGD). A Nuclear localization signal motif is present at residues 58–65 (KRRRTNSY). Residues 70-79 (AKKRNIKRQK) are compositionally biased toward basic residues.

In terms of assembly, component of nuclear RNase P and RNase MRP ribonucleoproteins. RNase P consists of a catalytic RNA moiety and different protein chains. Several subunits of RNase P are also part of the RNase MRP complex. RNase MRP consists of a catalytic RNA moiety and several protein subunits.

The protein localises to the nucleus. It localises to the nucleolus. Its function is as follows. Component of ribonuclease P, a ribonucleoprotein complex that generates mature tRNA molecules by cleaving their 5'-ends. Also a component of the MRP ribonuclease complex, which cleaves pre-rRNA sequences. Required for rRNA maturation, including 5.8S rRNA processing. This is Ribonucleases P/MRP protein subunit POP1 from Arabidopsis thaliana (Mouse-ear cress).